Consider the following 713-residue polypeptide: Phenylalanine--tRNA ligase beta subunit (713 aa).

A tRNA-binding domain is found at 39–153; that stretch reads IRHVENIKYG…EANLNEDPIA (115 aa). Residues 379–454 enclose the B5 domain; sequence LKPKEILFDH…RFYGYDNFPI (76 aa). Positions 432, 438, 441, and 442 each coordinate Mg(2+).

The protein belongs to the phenylalanyl-tRNA synthetase beta subunit family. Type 1 subfamily. As to quaternary structure, tetramer of two alpha and two beta subunits. Mg(2+) serves as cofactor.

The protein resides in the cytoplasm. The catalysed reaction is tRNA(Phe) + L-phenylalanine + ATP = L-phenylalanyl-tRNA(Phe) + AMP + diphosphate + H(+). The protein is Phenylalanine--tRNA ligase beta subunit of Mycoplasma mobile (strain ATCC 43663 / 163K / NCTC 11711) (Mesomycoplasma mobile).